Consider the following 393-residue polypeptide: Methylthioribose-1-phosphate isomerase (393 aa).

Residue Asp-265 is the Proton donor of the active site.

The protein belongs to the eIF-2B alpha/beta/delta subunits family. MtnA subfamily.

The protein localises to the cytoplasm. It is found in the nucleus. The catalysed reaction is 5-(methylsulfanyl)-alpha-D-ribose 1-phosphate = 5-(methylsulfanyl)-D-ribulose 1-phosphate. It participates in amino-acid biosynthesis; L-methionine biosynthesis via salvage pathway; L-methionine from S-methyl-5-thio-alpha-D-ribose 1-phosphate: step 1/6. Catalyzes the interconversion of methylthioribose-1-phosphate (MTR-1-P) into methylthioribulose-1-phosphate (MTRu-1-P). This is Methylthioribose-1-phosphate isomerase from Cryptococcus neoformans var. neoformans serotype D (strain JEC21 / ATCC MYA-565) (Filobasidiella neoformans).